A 277-amino-acid polypeptide reads, in one-letter code: Bifunctional protein FolD (277 aa).

Residues 164-166 (GRS), Ser-189, and Thr-230 contribute to the NADP(+) site.

Belongs to the tetrahydrofolate dehydrogenase/cyclohydrolase family. Homodimer.

It carries out the reaction (6R)-5,10-methylene-5,6,7,8-tetrahydrofolate + NADP(+) = (6R)-5,10-methenyltetrahydrofolate + NADPH. It catalyses the reaction (6R)-5,10-methenyltetrahydrofolate + H2O = (6R)-10-formyltetrahydrofolate + H(+). It functions in the pathway one-carbon metabolism; tetrahydrofolate interconversion. Catalyzes the oxidation of 5,10-methylenetetrahydrofolate to 5,10-methenyltetrahydrofolate and then the hydrolysis of 5,10-methenyltetrahydrofolate to 10-formyltetrahydrofolate. This chain is Bifunctional protein FolD, found in Clostridium perfringens (strain 13 / Type A).